Here is an 883-residue protein sequence, read N- to C-terminus: Translation initiation factor IF-2 (883 aa).

Positions 118 to 261 (VARESEAAPA…KKKEAFKKTE (144 aa)) are disordered. Residues 124–150 (AAPAEEPVAAAVKPASEPPVVQKAPVA) are compositionally biased toward low complexity. Composition is skewed to basic and acidic residues over residues 183-200 (PADR…EERI) and 252-261 (KKKEAFKKTE). Residues 383–552 (KRPPVVTIMG…LLQADVMDLK (170 aa)) enclose the tr-type G domain. Residues 392-399 (GHVDHGKT) form a G1 region. 392–399 (GHVDHGKT) provides a ligand contact to GTP. The G2 stretch occupies residues 417–421 (GITQH). Residues 438-441 (DTPG) form a G3 region. Residues 438–442 (DTPGH) and 492–495 (NKID) each bind GTP. Positions 492-495 (NKID) are G4. The G5 stretch occupies residues 528 to 530 (SAK).

Belongs to the TRAFAC class translation factor GTPase superfamily. Classic translation factor GTPase family. IF-2 subfamily.

It localises to the cytoplasm. One of the essential components for the initiation of protein synthesis. Protects formylmethionyl-tRNA from spontaneous hydrolysis and promotes its binding to the 30S ribosomal subunits. Also involved in the hydrolysis of GTP during the formation of the 70S ribosomal complex. This Geobacter sulfurreducens (strain ATCC 51573 / DSM 12127 / PCA) protein is Translation initiation factor IF-2.